The chain runs to 101 residues: uncharacterized protein (101 aa).

Residues 70–90 (VLFIPIILLLPPSCPLTGVTV) traverse the membrane as a helical segment.

The protein localises to the membrane. This is an uncharacterized protein from Saccharomyces cerevisiae (strain ATCC 204508 / S288c) (Baker's yeast).